The chain runs to 509 residues: Maturase K (509 aa).

The protein belongs to the intron maturase 2 family. MatK subfamily.

The protein localises to the plastid. The protein resides in the chloroplast. In terms of biological role, usually encoded in the trnK tRNA gene intron. Probably assists in splicing its own and other chloroplast group II introns. In Solanum bulbocastanum (Wild potato), this protein is Maturase K.